Consider the following 689-residue polypeptide: Elongation factor G (689 aa).

The 275-residue stretch at 8–282 folds into the tr-type G domain; the sequence is LNTRNIGIMA…AVVDYLPSPI (275 aa). GTP-binding positions include 17–24, 81–85, and 135–138; these read AHIDAGKT, DTPGH, and NKMD.

It belongs to the TRAFAC class translation factor GTPase superfamily. Classic translation factor GTPase family. EF-G/EF-2 subfamily.

It is found in the cytoplasm. Catalyzes the GTP-dependent ribosomal translocation step during translation elongation. During this step, the ribosome changes from the pre-translocational (PRE) to the post-translocational (POST) state as the newly formed A-site-bound peptidyl-tRNA and P-site-bound deacylated tRNA move to the P and E sites, respectively. Catalyzes the coordinated movement of the two tRNA molecules, the mRNA and conformational changes in the ribosome. In Mycoplasma capricolum subsp. capricolum (strain California kid / ATCC 27343 / NCTC 10154), this protein is Elongation factor G.